The following is a 322-amino-acid chain: RING finger protein 113B (322 aa).

The segment at 24–92 (KPGRKGAAGL…EEAAPESLDV (69 aa)) is disordered. Low complexity predominate over residues 46–60 (SSSSGDEGDTVAQPP). The C3H1-type zinc finger occupies 190-218 (DYQPDICKDYKETGFCGFGDSCKFLHDRS). The RING-type zinc finger occupies 256 to 294 (CFICRQAFQNPVVTKCRHYFCESCALEHFRATPRCYICD).

This is RING finger protein 113B (RNF113B) from Homo sapiens (Human).